A 175-amino-acid chain; its full sequence is Large ribosomal subunit protein uL15 (175 aa).

Basic and acidic residues predominate over residues 1-13 (MTIKLNELRDNNG). Disordered regions lie at residues 1–44 (MTIK…KARS) and 150–175 (VELP…AKNA). Positions 23 to 37 (RGIGSGKGKTAGRGQ) are enriched in gly residues.

This sequence belongs to the universal ribosomal protein uL15 family. Part of the 50S ribosomal subunit.

In terms of biological role, binds to the 23S rRNA. The sequence is that of Large ribosomal subunit protein uL15 from Sphingopyxis alaskensis (strain DSM 13593 / LMG 18877 / RB2256) (Sphingomonas alaskensis).